Reading from the N-terminus, the 402-residue chain is 8-amino-7-oxononanoate synthase (402 aa).

Arg26 provides a ligand contact to substrate. 114–115 (GY) lines the pyridoxal 5'-phosphate pocket. His139 lines the substrate pocket. Pyridoxal 5'-phosphate is bound by residues Ser182, His210, and Thr239. Residue Lys242 is modified to N6-(pyridoxal phosphate)lysine. Position 359 (Thr359) interacts with substrate.

This sequence belongs to the class-II pyridoxal-phosphate-dependent aminotransferase family. BioF subfamily. In terms of assembly, homodimer. Pyridoxal 5'-phosphate is required as a cofactor.

The enzyme catalyses 6-carboxyhexanoyl-[ACP] + L-alanine + H(+) = (8S)-8-amino-7-oxononanoate + holo-[ACP] + CO2. It participates in cofactor biosynthesis; biotin biosynthesis. In terms of biological role, catalyzes the decarboxylative condensation of pimeloyl-[acyl-carrier protein] and L-alanine to produce 8-amino-7-oxononanoate (AON), [acyl-carrier protein], and carbon dioxide. This Halorhodospira halophila (strain DSM 244 / SL1) (Ectothiorhodospira halophila (strain DSM 244 / SL1)) protein is 8-amino-7-oxononanoate synthase.